Here is a 3970-residue protein sequence, read N- to C-terminus: Polyketide synthase-nonribosomal peptide synthetase hybrid himA (3970 aa).

The 436-residue stretch at 8 to 443 folds into the Ketosynthase family 3 (KS3) domain; it reads SEPIAIIGSA…GTNSHAILES (436 aa). Catalysis depends on for beta-ketoacyl synthase activity residues Cys-181, His-320, and His-363. A malonyl-CoA:ACP transacylase (MAT) domain region spans residues 561 to 876; the sequence is IFTGQGAQWP…PYAGLLHRGR (316 aa). Residues 949–1083 are N-terminal hotdog fold; it reads HELLGVRTSD…GMVHLHLGEP (135 aa). The dehydratase (DH) domain stretch occupies residues 949–1253; that stretch reads HELLGVRTSD…GLTVVALSST (305 aa). In terms of domain architecture, PKS/mFAS DH spans 949–1256; the sequence is HELLGVRTSD…VVALSSTGPA (308 aa). The active-site Proton acceptor; for dehydratase activity is the His-981. The C-terminal hotdog fold stretch occupies residues 1098-1256; that stretch reads GLNRVDLDEF…VVALSSTGPA (159 aa). Residue Asp-1158 is the Proton donor; for dehydratase activity of the active site. A ketoreductase (KR) domain region spans residues 2060-2234; it reads TYVMIGLTGE…ASVLDIGMVS (175 aa). In terms of domain architecture, Carrier 1 spans 2342-2419; sequence AIAAILTESF…TLAEEVAKEL (78 aa). Residue Ser-2379 is modified to O-(pantetheine 4'-phosphoryl)serine. Positions 2420–2482 are disordered; sequence FEDRSTSAPP…NDDSDPTAQC (63 aa). Over residues 2445-2466 the composition is skewed to low complexity; that stretch reads GSSTDPSSNSDSKSGFDGFSSD. Residues 2467 to 2477 show a composition bias toward acidic residues; the sequence is DSSDIANDDSD. The interval 2487 to 2919 is condensation (C) domain; sequence PMSLSQARMW…ATTPTERVAT (433 aa). The segment at 2974–3381 is adenylation (A) domain; that stretch reads SYKAMSDRVN…LGDIANAILK (408 aa). The disordered stretch occupies residues 3466–3495; it reads RPLPASGDEDGDEDTETETGADADADAGAD. A compositionally biased stretch (acidic residues) spans 3472–3492; that stretch reads GDEDGDEDTETETGADADADA. The region spanning 3496-3574 is the Carrier 2 domain; sequence TTLSDIHSKL…AIAERILRGV (79 aa). An O-(pantetheine 4'-phosphoryl)serine modification is found at Ser-3534. The reductase (R) domain stretch occupies residues 3633–3866; that stretch reads LTGATGFLGR…FIRVETVAEE (234 aa).

The protein in the C-terminal section; belongs to the NRP synthetase family.

It functions in the pathway secondary metabolite biosynthesis. Functionally, polyketide synthase-nonribosomal peptide synthetase hybrid; part of the him gene cluster that mediates the biosynthesis of himeic acid A, a ubiquitin-activating enzyme (E1) inhibitor. First, himA, together with the trans-enoyl reductase himH, catalyzes the formation of apolyketide chain, which is then condensed with leucine by the NRPS activity of himA. Dieckmann cyclization and release from himA gives a tetramic acid intermediate as the product of himA PKS-NRPS. HimG then catalyzes alpha-oxidation of the tetramic acid ring, with a subsequent rearrangement to yield apyrone intermediate. Two terminal methyl groups of polyketide and amide side chains are oxidized to carboxylic acids by himC cytochrome P450 monooxygenase to form himeic acid A. Himeic acid A is further converted to himeic acids B and C during culture growth. No gene responsible for pyrone to pyridone conversion was found in the him gene cluster and himeic acid A is non-enzymatically converted to himeic acid C by the incorporation of an ammonium nitrogen atom in a pH5 buffer, and to himeic acid B at a conversion ratio of 50% during incubation in MeOH for 5 days. The polypeptide is Polyketide synthase-nonribosomal peptide synthetase hybrid himA (Aspergillus japonicus).